Reading from the N-terminus, the 717-residue chain is ATP-dependent zinc metalloprotease FtsH (717 aa).

The Cytoplasmic portion of the chain corresponds to 1 to 7 (MFKDKKM). A helical membrane pass occupies residues 8–28 (LKYIVIYSIIAFGILLTFNMV). The Extracellular portion of the chain corresponds to 29 to 109 (KDEMLYEKVD…VEFNVTKPEN (81 aa)). The helical transmembrane segment at 110–130 (YQLLGLLMSWVFPLILIFFVG) threads the bilayer. Residues 131 to 717 (RMMFSKMNNK…SSTNNKVDGE (587 aa)) lie on the Cytoplasmic side of the membrane. 206–213 (GPPGTGKT) contributes to the ATP binding site. Residue His427 participates in Zn(2+) binding. The active site involves Glu428. The Zn(2+) site is built by His431 and Asp504. Residues 670–717 (KLARANNEANNDALDSSKENEEVKSNVNDGATEEKKDDSSTNNKVDGE) form a disordered region. Composition is skewed to basic and acidic residues over residues 684 to 693 (DSSKENEEVK) and 701 to 717 (TEEKKDDSSTNNKVDGE).

In the central section; belongs to the AAA ATPase family. The protein in the C-terminal section; belongs to the peptidase M41 family. Homohexamer. Zn(2+) serves as cofactor.

Its subcellular location is the cell membrane. Acts as a processive, ATP-dependent zinc metallopeptidase for both cytoplasmic and membrane proteins. Plays a role in the quality control of integral membrane proteins. This chain is ATP-dependent zinc metalloprotease FtsH, found in Clostridium perfringens (strain ATCC 13124 / DSM 756 / JCM 1290 / NCIMB 6125 / NCTC 8237 / Type A).